The chain runs to 513 residues: MTAGSAPPVDYTSLKKNFQPFLSRRVENRSLKSFWDASDISDDVIELAGGMPNERFFPIESMDLKISKVPFNDNPKWHNSFTTAHLDLGSPSELPIARSFQYAETKGLPPLLHFVKDFVSRINRPAFSDETESNWDVILSGGSNDSMFKVFETICDESTTVMIEEFTFTPAMSNVEATGAKVIPIKMNLTFDRESQGIDVEYLTQLLDNWSTGPYKDLNKPRVLYTIATGQNPTGMSVPQWKREKIYQLAQRHDFLIVEDDPYGYLYFPSYNPQEPLENPYHSSDLTTERYLNDFLMKSFLTLDTDARVIRLETFSKIFAPGLRLSFIVANKFLLQKILDLADITTRAPSGTSQAIVYSTIKAMAESNLSSSLSMKEAMFEGWIRWIMQIASKYNHRKNLTLKALYETESYQAGQFTVMEPSAGMFIIIKINWGNFDRPDDLPQQMDILDKFLLKNGVKVVLGYKMAVCPNYSKQNSDFLRLTIAYARDDDQLIEASKRIGSGIKEFFDNYKS.

A phosphoserine mark is found at S90 and S92. Pyridoxal 5'-phosphate contacts are provided by residues Y102, 143–144 (SN), N232, Y263, and 314–316 (TFS). N232 lines the substrate pocket. K317 carries the N6-(pyridoxal phosphate)lysine modification. R324 serves as a coordination point for pyridoxal 5'-phosphate. R481 contributes to the substrate binding site.

The protein belongs to the class-I pyridoxal-phosphate-dependent aminotransferase family. Requires pyridoxal 5'-phosphate as cofactor.

It is found in the cytoplasm. It catalyses the reaction an aromatic L-alpha-amino acid + 2-oxoglutarate = an aromatic oxo-acid + L-glutamate. The catalysed reaction is an aromatic L-alpha-amino acid + 4-methylsulfanyl-2-oxobutanoate = an aromatic oxo-acid + L-methionine. It carries out the reaction L-kynurenine + 2-oxoglutarate = kynurenate + L-glutamate + H2O. It participates in amino-acid biosynthesis; L-methionine biosynthesis via salvage pathway; L-methionine from S-methyl-5-thio-alpha-D-ribose 1-phosphate: step 6/6. The protein operates within amino-acid degradation; L-kynurenine degradation; kynurenate from L-kynurenine: step 1/2. Its function is as follows. General aromatic amino acid transaminase involved in several otherwise unrelated metabolic pathways. Mainly involved in tryptophan degradation. Active with phenylalanine, tyrosine and tryptophan as amino donors and with phenylpyruvate, hydroxyphenylpyruvate and pyruvate as amino acceptors. Does not accept glutamate or 2-oxoglutarate as substrates. Also active with methionine, leucine, glutamine and kynurenine. Catalyzes the formation of methionine from 2-keto-4-methylthiobutyrate (KMTB) in the methionine salvage pathway primarily using aromatic amino acids (tyrosine, phenylalanine and tryptophan) as the amino donors. Catalyzes the irreversible transamination of the L-tryptophan metabolite L-kynurenine to form kynurenic acid (KA) with pyruvate as amino acceptor. The protein is Aromatic amino acid aminotransferase 2 of Saccharomyces cerevisiae (strain ATCC 204508 / S288c) (Baker's yeast).